A 706-amino-acid polypeptide reads, in one-letter code: Fatty acid oxidation complex subunit alpha (706 aa).

The interval 1 to 188 (MEKTFNLTRR…KMGLVNDVVP (188 aa)) is enoyl-CoA hydratase. Residues 308–706 (RKVKKAVILG…TMARENVSFF (399 aa)) form a 3-hydroxyacyl-CoA dehydrogenase region.

It in the N-terminal section; belongs to the enoyl-CoA hydratase/isomerase family. In the central section; belongs to the 3-hydroxyacyl-CoA dehydrogenase family. In terms of assembly, heterotetramer of two alpha chains (FadJ) and two beta chains (FadI).

The protein resides in the cytoplasm. It catalyses the reaction a (3S)-3-hydroxyacyl-CoA = a (2E)-enoyl-CoA + H2O. The catalysed reaction is a 4-saturated-(3S)-3-hydroxyacyl-CoA = a (3E)-enoyl-CoA + H2O. The enzyme catalyses a (3S)-3-hydroxyacyl-CoA + NAD(+) = a 3-oxoacyl-CoA + NADH + H(+). It carries out the reaction (3S)-3-hydroxybutanoyl-CoA = (3R)-3-hydroxybutanoyl-CoA. It participates in lipid metabolism; fatty acid beta-oxidation. Functionally, catalyzes the formation of a hydroxyacyl-CoA by addition of water on enoyl-CoA. Also exhibits 3-hydroxyacyl-CoA epimerase and 3-hydroxyacyl-CoA dehydrogenase activities. This chain is Fatty acid oxidation complex subunit alpha, found in Shewanella putrefaciens (strain CN-32 / ATCC BAA-453).